Consider the following 478-residue polypeptide: Protein nucleotidyltransferase YdiU (478 aa).

The ATP site is built by Gly-84, Gly-86, Arg-87, Lys-107, Asp-119, Gly-120, Arg-170, and Arg-177. Asp-246 acts as the Proton acceptor in catalysis. The Mg(2+) site is built by Asn-247 and Asp-256. Asp-256 contacts ATP.

This sequence belongs to the SELO family. It depends on Mg(2+) as a cofactor. Mn(2+) is required as a cofactor.

The catalysed reaction is L-seryl-[protein] + ATP = 3-O-(5'-adenylyl)-L-seryl-[protein] + diphosphate. The enzyme catalyses L-threonyl-[protein] + ATP = 3-O-(5'-adenylyl)-L-threonyl-[protein] + diphosphate. It carries out the reaction L-tyrosyl-[protein] + ATP = O-(5'-adenylyl)-L-tyrosyl-[protein] + diphosphate. It catalyses the reaction L-histidyl-[protein] + UTP = N(tele)-(5'-uridylyl)-L-histidyl-[protein] + diphosphate. The catalysed reaction is L-seryl-[protein] + UTP = O-(5'-uridylyl)-L-seryl-[protein] + diphosphate. The enzyme catalyses L-tyrosyl-[protein] + UTP = O-(5'-uridylyl)-L-tyrosyl-[protein] + diphosphate. Nucleotidyltransferase involved in the post-translational modification of proteins. It can catalyze the addition of adenosine monophosphate (AMP) or uridine monophosphate (UMP) to a protein, resulting in modifications known as AMPylation and UMPylation. The protein is Protein nucleotidyltransferase YdiU of Escherichia coli O6:K15:H31 (strain 536 / UPEC).